We begin with the raw amino-acid sequence, 213 residues long: Pyridoxine/pyridoxamine 5'-phosphate oxidase 2 (213 aa).

Substrate is bound by residues 9-12 (RQRY) and Lys-67. Residues 62-67 (RTVLLK), 77-78 (FT), Lys-84, and Gln-106 contribute to the FMN site. Residues Tyr-124, Arg-128, and Ser-132 each contribute to the substrate site. FMN-binding positions include 141–142 (QS) and Trp-186. Substrate is bound at residue 192 to 194 (RLH). Arg-196 provides a ligand contact to FMN.

This sequence belongs to the pyridoxamine 5'-phosphate oxidase family. In terms of assembly, homodimer. Requires FMN as cofactor.

The catalysed reaction is pyridoxamine 5'-phosphate + O2 + H2O = pyridoxal 5'-phosphate + H2O2 + NH4(+). It carries out the reaction pyridoxine 5'-phosphate + O2 = pyridoxal 5'-phosphate + H2O2. It functions in the pathway cofactor metabolism; pyridoxal 5'-phosphate salvage; pyridoxal 5'-phosphate from pyridoxamine 5'-phosphate: step 1/1. The protein operates within cofactor metabolism; pyridoxal 5'-phosphate salvage; pyridoxal 5'-phosphate from pyridoxine 5'-phosphate: step 1/1. In terms of biological role, catalyzes the oxidation of either pyridoxine 5'-phosphate (PNP) or pyridoxamine 5'-phosphate (PMP) into pyridoxal 5'-phosphate (PLP). In Hydrogenovibrio crunogenus (strain DSM 25203 / XCL-2) (Thiomicrospira crunogena), this protein is Pyridoxine/pyridoxamine 5'-phosphate oxidase 2.